The sequence spans 181 residues: MTVRLKTLYLDTAVPKLQEQFKYKNAHEIPKVTKVSVNRGLGEASQNAKALERSLEELAVITGQRPVVTRAKKAIAGFKIRQGMPVGVMVTLRGERMYAFLDRLVNLALPRIRDFRGVSPKSFDGRGNYTLGLREQLIFPEVDYDSIDQIRGMDISIITTAKTDEEGRALLKVLGMPFREN.

Belongs to the universal ribosomal protein uL5 family. Part of the 50S ribosomal subunit; part of the 5S rRNA/L5/L18/L25 subcomplex. Contacts the 5S rRNA and the P site tRNA. Forms a bridge to the 30S subunit in the 70S ribosome.

Its function is as follows. This is one of the proteins that bind and probably mediate the attachment of the 5S RNA into the large ribosomal subunit, where it forms part of the central protuberance. In the 70S ribosome it contacts protein S13 of the 30S subunit (bridge B1b), connecting the 2 subunits; this bridge is implicated in subunit movement. Contacts the P site tRNA; the 5S rRNA and some of its associated proteins might help stabilize positioning of ribosome-bound tRNAs. The sequence is that of Large ribosomal subunit protein uL5 from Acaryochloris marina (strain MBIC 11017).